The primary structure comprises 124 residues: Large ribosomal subunit protein bL17 (124 aa).

The protein belongs to the bacterial ribosomal protein bL17 family. As to quaternary structure, part of the 50S ribosomal subunit. Contacts protein L32.

The chain is Large ribosomal subunit protein bL17 from Trichlorobacter lovleyi (strain ATCC BAA-1151 / DSM 17278 / SZ) (Geobacter lovleyi).